A 114-amino-acid chain; its full sequence is Ribosome-binding factor A (114 aa).

Belongs to the RbfA family. In terms of assembly, monomer. Binds 30S ribosomal subunits, but not 50S ribosomal subunits or 70S ribosomes.

The protein resides in the cytoplasm. In terms of biological role, one of several proteins that assist in the late maturation steps of the functional core of the 30S ribosomal subunit. Associates with free 30S ribosomal subunits (but not with 30S subunits that are part of 70S ribosomes or polysomes). Required for efficient processing of 16S rRNA. May interact with the 5'-terminal helix region of 16S rRNA. This is Ribosome-binding factor A from Phytoplasma mali (strain AT).